Reading from the N-terminus, the 312-residue chain is Ribosomal RNA small subunit methyltransferase H (312 aa).

S-adenosyl-L-methionine-binding positions include 33–35 (GGY), aspartate 51, phenylalanine 78, aspartate 97, and glutamine 104.

Belongs to the methyltransferase superfamily. RsmH family.

Its subcellular location is the cytoplasm. It carries out the reaction cytidine(1402) in 16S rRNA + S-adenosyl-L-methionine = N(4)-methylcytidine(1402) in 16S rRNA + S-adenosyl-L-homocysteine + H(+). Functionally, specifically methylates the N4 position of cytidine in position 1402 (C1402) of 16S rRNA. This Orientia tsutsugamushi (strain Boryong) (Rickettsia tsutsugamushi) protein is Ribosomal RNA small subunit methyltransferase H.